The chain runs to 823 residues: Ankyrin repeat domain-containing protein 20A1 (823 aa).

ANK repeat units follow at residues 66-95 (QHRTALHLACTSGHVQVVTLLVNRKCQIDV), 99-128 (ENRTPLIQAVHCQEEACAVILLEHGANPNL), 132-161 (YGNTALHYAVYSESTSLAEKLLSHGAHIEA), 165-194 (DNNTPLLFAIICKKEKMVEFLLKKKASSHA), and 198-227 (LRRSALMLAVYYDSPGIVNILLKQNIDVFA). Disordered regions lie at residues 301–343 (VPEK…EVED) and 355–402 (VQTL…LSEN). Residues 372-384 (QERHERSEKKQPQ) are compositionally biased toward basic and acidic residues. Coiled coils occupy residues 431–480 (KKLK…KQLE), 565–724 (EMIT…NNST), and 776–805 (LVLEEKSKKLMNECDHLKESLFQYEREKTE).

In Homo sapiens (Human), this protein is Ankyrin repeat domain-containing protein 20A1 (ANKRD20A1).